A 122-amino-acid polypeptide reads, in one-letter code: Large ribosomal subunit protein uL18 (122 aa).

This sequence belongs to the universal ribosomal protein uL18 family. As to quaternary structure, part of the 50S ribosomal subunit; part of the 5S rRNA/L5/L18/L25 subcomplex. Contacts the 5S and 23S rRNAs.

Its function is as follows. This is one of the proteins that bind and probably mediate the attachment of the 5S RNA into the large ribosomal subunit, where it forms part of the central protuberance. This is Large ribosomal subunit protein uL18 from Pseudothermotoga lettingae (strain ATCC BAA-301 / DSM 14385 / NBRC 107922 / TMO) (Thermotoga lettingae).